Consider the following 581-residue polypeptide: Proline--tRNA ligase (581 aa).

The protein belongs to the class-II aminoacyl-tRNA synthetase family. ProS type 1 subfamily. Homodimer.

It is found in the cytoplasm. The enzyme catalyses tRNA(Pro) + L-proline + ATP = L-prolyl-tRNA(Pro) + AMP + diphosphate. Its function is as follows. Catalyzes the attachment of proline to tRNA(Pro) in a two-step reaction: proline is first activated by ATP to form Pro-AMP and then transferred to the acceptor end of tRNA(Pro). As ProRS can inadvertently accommodate and process non-cognate amino acids such as alanine and cysteine, to avoid such errors it has two additional distinct editing activities against alanine. One activity is designated as 'pretransfer' editing and involves the tRNA(Pro)-independent hydrolysis of activated Ala-AMP. The other activity is designated 'posttransfer' editing and involves deacylation of mischarged Ala-tRNA(Pro). The misacylated Cys-tRNA(Pro) is not edited by ProRS. The protein is Proline--tRNA ligase of Rhodococcus erythropolis (strain PR4 / NBRC 100887).